A 146-amino-acid chain; its full sequence is Large ribosomal subunit protein bL9 (146 aa).

It belongs to the bacterial ribosomal protein bL9 family.

Its function is as follows. Binds to the 23S rRNA. This is Large ribosomal subunit protein bL9 from Flavobacterium johnsoniae (strain ATCC 17061 / DSM 2064 / JCM 8514 / BCRC 14874 / CCUG 350202 / NBRC 14942 / NCIMB 11054 / UW101) (Cytophaga johnsonae).